The primary structure comprises 194 residues: MEEKLKKTKIIFVVGGPGSGKGTQCEKIVQKYGYTHLSTGDLLRSEVSSGSARGKKLSEIMEKGQLVPLETVLDMLRDAMVAKVNTSKGFLIDGYPREVQQGEEFERRIGQPTLLLYVDAGPETMTQRLLKRGETSGRVDDNEETIKKRLETYYKATEPVIAFYEKRGIVRKVNAEGSVDSVFSQVCTHLDALK.

Position 1 is an N-acetylmethionine (M1). 18-23 (GSGKGT) serves as a coordination point for ATP. The residue at position 38 (S38) is a Phosphoserine. The segment at 38–67 (STGDLLRSEVSSGSARGKKLSEIMEKGQLV) is NMP. AMP contacts are provided by residues T39, R44, 65 to 67 (QLV), 94 to 97 (GYPR), and Q101. The tract at residues 131–141 (KRGETSGRVDD) is LID. R132 contributes to the ATP binding site. R138 and R149 together coordinate AMP. ATP is bound at residue G177.

It belongs to the adenylate kinase family. AK1 subfamily. As to quaternary structure, monomer. The cofactor is Mg(2+).

It is found in the cytoplasm. The catalysed reaction is a ribonucleoside 5'-phosphate + ATP = a ribonucleoside 5'-diphosphate + ADP. The enzyme catalyses AMP + ATP = 2 ADP. It carries out the reaction dAMP + ATP = dADP + ADP. It catalyses the reaction dATP + AMP = dADP + ADP. The catalysed reaction is dAMP + dATP = 2 dADP. The enzyme catalyses a 2'-deoxyribonucleoside 5'-diphosphate + ATP = a 2'-deoxyribonucleoside 5'-triphosphate + ADP. It carries out the reaction a ribonucleoside 5'-diphosphate + ATP = a ribonucleoside 5'-triphosphate + ADP. It catalyses the reaction CDP + GTP = CTP + GDP. The catalysed reaction is GDP + ATP = GTP + ADP. The enzyme catalyses UDP + ATP = UTP + ADP. It carries out the reaction GTP + UDP = UTP + GDP. It catalyses the reaction dTDP + GTP = dTTP + GDP. The catalysed reaction is dCDP + GTP = dCTP + GDP. The enzyme catalyses dGDP + ATP = dGTP + ADP. It carries out the reaction dADP + GTP = dATP + GDP. It catalyses the reaction thiamine diphosphate + ADP = thiamine triphosphate + AMP. In terms of biological role, catalyzes the reversible transfer of the terminal phosphate group between ATP and AMP. Also displays broad nucleoside diphosphate kinase activity. Plays an important role in cellular energy homeostasis and in adenine nucleotide metabolism. Also catalyzes at a very low rate the synthesis of thiamine triphosphate (ThTP) from thiamine diphosphate (ThDP) and ADP. This chain is Adenylate kinase isoenzyme 1, found in Homo sapiens (Human).